The chain runs to 504 residues: Cholesterol 7-alpha-monooxygenase (504 aa).

C444 is a binding site for heme.

The protein belongs to the cytochrome P450 family. Heme is required as a cofactor.

Its subcellular location is the endoplasmic reticulum membrane. It is found in the microsome membrane. It catalyses the reaction cholesterol + reduced [NADPH--hemoprotein reductase] + O2 = 7alpha-hydroxycholesterol + oxidized [NADPH--hemoprotein reductase] + H2O + H(+). It functions in the pathway lipid metabolism; bile acid biosynthesis. In terms of biological role, catalyzes a rate-limiting step in cholesterol catabolism and bile acid biosynthesis by introducing a hydrophilic moiety at position 7 of cholesterol. Important for cholesterol homeostasis. This Cricetulus griseus (Chinese hamster) protein is Cholesterol 7-alpha-monooxygenase (CYP7A1).